The chain runs to 364 residues: Nuclear hormone receptor family member nhr-53 (364 aa).

A DNA-binding region (nuclear receptor) is located at residues 20-95 (PSYCLICCEV…VGMQRSSVQQ (76 aa)). 2 consecutive NR C4-type zinc fingers follow at residues 23–43 (CLIC…CRAC) and 59–83 (CPKN…YEKC). Positions 110 to 363 (REEPVLDTMR…KNLYDMFSPT (254 aa)) constitute an NR LBD domain.

It belongs to the nuclear hormone receptor family.

Its subcellular location is the nucleus. Its function is as follows. Orphan nuclear receptor. The protein is Nuclear hormone receptor family member nhr-53 (nhr-53) of Caenorhabditis elegans.